A 379-amino-acid chain; its full sequence is tRNA-specific 2-thiouridylase MnmA (379 aa).

Residues 23–30 (AMSGGVDS) and leucine 49 each bind ATP. The Nucleophile role is filled by cysteine 117. Cysteine 117 and cysteine 214 are oxidised to a cystine. Residue glycine 141 participates in ATP binding. The interval 163–165 (RDQ) is interaction with tRNA. Cysteine 214 (cysteine persulfide intermediate) is an active-site residue.

The protein belongs to the MnmA/TRMU family.

It is found in the cytoplasm. The enzyme catalyses S-sulfanyl-L-cysteinyl-[protein] + uridine(34) in tRNA + AH2 + ATP = 2-thiouridine(34) in tRNA + L-cysteinyl-[protein] + A + AMP + diphosphate + H(+). Catalyzes the 2-thiolation of uridine at the wobble position (U34) of tRNA, leading to the formation of s(2)U34. The polypeptide is tRNA-specific 2-thiouridylase MnmA (Cereibacter sphaeroides (strain ATCC 17023 / DSM 158 / JCM 6121 / CCUG 31486 / LMG 2827 / NBRC 12203 / NCIMB 8253 / ATH 2.4.1.) (Rhodobacter sphaeroides)).